A 336-amino-acid polypeptide reads, in one-letter code: tRNA-splicing endonuclease (336 aa).

Residues Y271, H282, and K313 contribute to the active site.

This sequence belongs to the tRNA-intron endonuclease family. Archaeal long subfamily. Homodimer.

It catalyses the reaction pretRNA = a 3'-half-tRNA molecule with a 5'-OH end + a 5'-half-tRNA molecule with a 2',3'-cyclic phosphate end + an intron with a 2',3'-cyclic phosphate and a 5'-hydroxyl terminus.. Endonuclease that removes tRNA introns. Cleaves pre-tRNA at the 5'- and 3'-splice sites to release the intron. The products are an intron and two tRNA half-molecules bearing 2',3' cyclic phosphate and 5'-OH termini. Recognizes a pseudosymmetric substrate in which 2 bulged loops of 3 bases are separated by a stem of 4 bp. The polypeptide is tRNA-splicing endonuclease (Natronomonas pharaonis (strain ATCC 35678 / DSM 2160 / CIP 103997 / JCM 8858 / NBRC 14720 / NCIMB 2260 / Gabara) (Halobacterium pharaonis)).